A 489-amino-acid polypeptide reads, in one-letter code: Rhamnulokinase (489 aa).

Residue 13 to 17 (ASSGR) coordinates ATP. A disulfide bridge connects residues cysteine 68 and cysteine 222. Residues glycine 83 and 236 to 238 (HDT) contribute to the substrate site. The active-site Proton acceptor is aspartate 237. Residue threonine 259 participates in ATP binding. A substrate-binding site is contributed by asparagine 296. ATP is bound at residue glutamine 304. A disulfide bond links cysteine 353 and cysteine 370. Glycine 402 contacts ATP. Residues cysteine 413 and cysteine 417 are joined by a disulfide bond.

Belongs to the rhamnulokinase family. The cofactor is Mg(2+).

The enzyme catalyses L-rhamnulose + ATP = L-rhamnulose 1-phosphate + ADP + H(+). Its pathway is carbohydrate degradation; L-rhamnose degradation; glycerone phosphate from L-rhamnose: step 2/3. Functionally, involved in the catabolism of L-rhamnose (6-deoxy-L-mannose). Catalyzes the transfer of the gamma-phosphate group from ATP to the 1-hydroxyl group of L-rhamnulose to yield L-rhamnulose 1-phosphate. This chain is Rhamnulokinase, found in Salmonella choleraesuis (strain SC-B67).